We begin with the raw amino-acid sequence, 316 residues long: L-lactate dehydrogenase (316 aa).

NAD(+) is bound by residues methionine 14, 14 to 150 (MIGG…IIGL), isoleucine 15, aspartate 35, tyrosine 67, glycine 81, phenylalanine 82, valine 125, asparagine 127, and leucine 150. A substrate-binding site is contributed by arginine 95. Positions 158 and 182 each coordinate substrate. Histidine 182 serves as the catalytic Proton acceptor.

Belongs to the LDH/MDH superfamily. LDH family. As to quaternary structure, homotetramer.

The catalysed reaction is (S)-lactate + NAD(+) = pyruvate + NADH + H(+). The protein operates within fermentation; pyruvate fermentation to lactate; (S)-lactate from pyruvate: step 1/1. The polypeptide is L-lactate dehydrogenase (Plasmodium falciparum (isolate CDC / Honduras)).